A 359-amino-acid chain; its full sequence is 3-isopropylmalate dehydrogenase (359 aa).

76–89 lines the NAD(+) pocket; sequence GPKWDTIERSIRPE. Residues Arg96, Arg106, Arg134, and Asp225 each contribute to the substrate site. Residues Asp225, Asp249, and Asp253 each contribute to the Mg(2+) site. 283–295 is a binding site for NAD(+); that stretch reads GSAPDIAGQNVAN.

The protein belongs to the isocitrate and isopropylmalate dehydrogenases family. LeuB type 1 subfamily. As to quaternary structure, homodimer. It depends on Mg(2+) as a cofactor. Mn(2+) is required as a cofactor.

It localises to the cytoplasm. The enzyme catalyses (2R,3S)-3-isopropylmalate + NAD(+) = 4-methyl-2-oxopentanoate + CO2 + NADH. It participates in amino-acid biosynthesis; L-leucine biosynthesis; L-leucine from 3-methyl-2-oxobutanoate: step 3/4. Its function is as follows. Catalyzes the oxidation of 3-carboxy-2-hydroxy-4-methylpentanoate (3-isopropylmalate) to 3-carboxy-4-methyl-2-oxopentanoate. The product decarboxylates to 4-methyl-2 oxopentanoate. This is 3-isopropylmalate dehydrogenase from Acinetobacter baylyi (strain ATCC 33305 / BD413 / ADP1).